A 282-amino-acid polypeptide reads, in one-letter code: 2-dehydro-3-deoxyphosphooctonate aldolase (282 aa).

This sequence belongs to the KdsA family.

It is found in the cytoplasm. The enzyme catalyses D-arabinose 5-phosphate + phosphoenolpyruvate + H2O = 3-deoxy-alpha-D-manno-2-octulosonate-8-phosphate + phosphate. It functions in the pathway carbohydrate biosynthesis; 3-deoxy-D-manno-octulosonate biosynthesis; 3-deoxy-D-manno-octulosonate from D-ribulose 5-phosphate: step 2/3. It participates in bacterial outer membrane biogenesis; lipopolysaccharide biosynthesis. The protein is 2-dehydro-3-deoxyphosphooctonate aldolase of Bartonella bacilliformis (strain ATCC 35685 / KC583 / Herrer 020/F12,63).